We begin with the raw amino-acid sequence, 208 residues long: MIGLIGRKVGMTRVFNEDGVSIPVTVIEIEANRVTQVKTLENDGYSAIQVTTGTKKASRVTKPEAGHFVKAGVEAGRGLWEFRTEGEEFTLGQEINVDIFADVKKVDVTGTSKGKGFAGGVKRWNFRTQDATHGNSLSHRVLGSIGQNQTPGRVFKGKKMAGHLGAERVTVQSLEVVRVDAERKLLLVKGAVPGATNSNVIVKPAVKA.

N5-methylglutamine is present on Gln149.

The protein belongs to the universal ribosomal protein uL3 family. As to quaternary structure, part of the 50S ribosomal subunit. Forms a cluster with proteins L14 and L19. Post-translationally, methylated by PrmB.

Functionally, one of the primary rRNA binding proteins, it binds directly near the 3'-end of the 23S rRNA, where it nucleates assembly of the 50S subunit. The protein is Large ribosomal subunit protein uL3 of Haemophilus ducreyi (strain 35000HP / ATCC 700724).